Consider the following 372-residue polypeptide: Cytochrome b (372 aa).

4 helical membrane passes run Phe-25 to Met-45, Trp-69 to Val-90, Trp-105 to Leu-125, and Phe-170 to Met-190. His-75 and His-89 together coordinate heme b. Heme b is bound by residues His-174 and His-188. His-193 provides a ligand contact to a ubiquinone. 4 helical membrane passes run Tyr-218–Ile-238, Leu-280–His-300, Phe-312–Thr-332, and Tyr-339–Pro-358.

This sequence belongs to the cytochrome b family. The cytochrome bc1 complex contains 3 respiratory subunits (MT-CYB, CYC1 and UQCRFS1), 2 core proteins (UQCRC1 and UQCRC2) and probably 6 low-molecular weight proteins. Requires heme b as cofactor.

It localises to the mitochondrion inner membrane. Functionally, component of the ubiquinol-cytochrome c reductase complex (complex III or cytochrome b-c1 complex) that is part of the mitochondrial respiratory chain. The b-c1 complex mediates electron transfer from ubiquinol to cytochrome c. Contributes to the generation of a proton gradient across the mitochondrial membrane that is then used for ATP synthesis. This Acrantophis dumerili (Dumeril's ground boa) protein is Cytochrome b (MT-CYB).